Here is a 196-residue protein sequence, read N- to C-terminus: MPIGVPKVPFRSPGEGDTSWVDIYNRLYRERLFFLGQDVDTEISNQLISLMIYLSIEKDTKDLYLFINSPGGWVISGMAIYDTMQFVRPDVQTICMGLAASIASFILVGGAITKRIAFPHARVMIHQPASSFYEAQTGEFILEAEELLKLRETITRVYVQRTGKPIWVVSEDMERDVFMSATEAQAHGIVDLVAVQ.

The Nucleophile role is filled by Ser-101. His-126 is an active-site residue.

It belongs to the peptidase S14 family. Component of the chloroplastic Clp protease core complex.

It localises to the plastid. The protein resides in the chloroplast stroma. It carries out the reaction Hydrolysis of proteins to small peptides in the presence of ATP and magnesium. alpha-casein is the usual test substrate. In the absence of ATP, only oligopeptides shorter than five residues are hydrolyzed (such as succinyl-Leu-Tyr-|-NHMec, and Leu-Tyr-Leu-|-Tyr-Trp, in which cleavage of the -Tyr-|-Leu- and -Tyr-|-Trp bonds also occurs).. In terms of biological role, cleaves peptides in various proteins in a process that requires ATP hydrolysis. Has a chymotrypsin-like activity. Plays a major role in the degradation of misfolded proteins. This Lepidium virginicum (Virginia pepperweed) protein is ATP-dependent Clp protease proteolytic subunit.